Here is a 628-residue protein sequence, read N- to C-terminus: MAIILLDTKTINRIAAGEVIERPASVVKELVENAIDAGSSEIEIKIESGGCNLITITDDGGGIEKSDLELAFMRHATSKLSDSELIEIKHLGFRGEALSSIAAVSRIKLSSKANGASEAWSISYEGGEKIGELIPYSLPQGTHIEVRDLFFATPNRLKFLKTERAEIQSIVDIVNNLAMINYSIGFTLTSGSKKPLKYAKQTSLFSRLCEVEEEFQDNSLEINEEEDGVRLTGHICKPTVNRGKSDMIYTFVNGRPIKDNLLVSAIRYAYHDFIPSNRYPFATLHLEIPYDQIDVNVHPNKSEVRFQNKRLIYEIVRRGLIKALSTRTGNSAVSNIDRSRCQGIGKETSGLPFDVSESQGNDNHINNGKSRETKSERELYERRPNPFENRLMKESNSPSVGKKDLSERSVLFDSGIQKSLSQAKTVVLEREQIDLIENHPLGFARCQVYNTYIIAEARGKLIIVDQHAAHERLVYECLKQKSSIKRQKLLLSEVVEIKNQAGMEMVEVYKDKLFEMGFDIQINSENKVIVKEIPAILGTIDVKEMLIDIVDRLMEIEDMLPIEDKVNKILATIACHGSIRAGRTMKLEEMNVLLRQMEETPYSGQCNHGRPTHIEMKLSDIEKLFERR.

Positions 350–402 are disordered; the sequence is GLPFDVSESQGNDNHINNGKSRETKSERELYERRPNPFENRLMKESNSPSVGK. Residues 356–368 are compositionally biased toward polar residues; sequence SESQGNDNHINNG. Residues 369-393 show a composition bias toward basic and acidic residues; it reads KSRETKSERELYERRPNPFENRLMK.

Belongs to the DNA mismatch repair MutL/HexB family.

In terms of biological role, this protein is involved in the repair of mismatches in DNA. It is required for dam-dependent methyl-directed DNA mismatch repair. May act as a 'molecular matchmaker', a protein that promotes the formation of a stable complex between two or more DNA-binding proteins in an ATP-dependent manner without itself being part of a final effector complex. In Wolbachia sp. subsp. Brugia malayi (strain TRS), this protein is DNA mismatch repair protein MutL.